The chain runs to 2415 residues: Bradyzoite-formation deficient protein 1 (2415 aa).

Disordered stretches follow at residues 369 to 392, 418 to 481, and 761 to 845; these read WNKPEAARQEYHRASASARGPEET, HLTS…PYTR, and DGCG…QDTQ. The segment covering 419-429 has biased composition (basic residues); sequence LTSRQHPNPRP. Positions 430–443 are enriched in basic and acidic residues; sequence RMKEEHCGREREVL. Composition is skewed to polar residues over residues 444–460 and 832–843; these read SSEQPSDCGETQKTPAS and PRTTSSSSYGQD. A Myb-like domain is found at 921-968; it reads WSAEEDASLAELVSRKGFKWALISSQLTGAFGIPRTGKQCRERWFNHV. Residues 969 to 1023 form the HTH myb-type domain; the sequence is NPEVKKGDWSAEEDAMILMLQNELGNRWATIAKKLRGRTENAVKNRFISLSNARL. The segment at residues 996–1019 is a DNA-binding region (H-T-H motif); sequence WATIAKKLRGRTENAVKNRFISLS. 8 disordered regions span residues 1027–1050, 1098–1127, 1206–1270, 1319–1343, 1501–1521, 1905–1932, 1959–2013, and 2161–2222; these read RPKRDGSSADCFSNRRTGSGKSSG, VSRPRQCTGTSPSCGHPSAGEGDPSHLKNT, NDER…NGLD, PACDHRGAPQNSVESGEQSPDAQRQ, QLWTSQETESDTNPSPNQQHE, VSRDKQREPPKNGLTGCDVPEYLGTSQS, RVRW…GSTA, and GTDA…EMQD. Residues 1036–1050 are compositionally biased toward polar residues; the sequence is DCFSNRRTGSGKSSG. Over residues 1227-1237 the composition is skewed to basic and acidic residues; that stretch reads AHEHADIARSD. Polar residues-rich tracts occupy residues 1327–1343 and 1501–1520; these read PQNSVESGEQSPDAQRQ and QLWTSQETESDTNPSPNQQH. The span at 1974–1985 shows a compositional bias: polar residues; it reads SVSSGASNSATT. The span at 2181–2197 shows a compositional bias: basic and acidic residues; the sequence is QAHRRDGHDMQRVQRCD.

It is found in the nucleus. Master transcription factor that controls the differentiation of acute-stage tachyzoite parasites into chronic-stage bradyzoites, which form intracellular cysts resistant to immune clearance and existing therapies. Sufficient to drive differentiation into bradyzoite stage. Following translation in response to stress conditions, binds to the promoter of many chronic stage-specific genes and promotes their expression, thereby driving differentiation into bradyzoites. The protein is Bradyzoite-formation deficient protein 1 of Toxoplasma gondii (strain ATCC 50611 / Me49).